Reading from the N-terminus, the 156-residue chain is 6,7-dimethyl-8-ribityllumazine synthase (156 aa).

5-amino-6-(D-ribitylamino)uracil contacts are provided by residues F23, 57 to 59, and 81 to 83; these read AYE and AII. Residue 86–87 participates in (2S)-2-hydroxy-3-oxobutyl phosphate binding; that stretch reads GT. The active-site Proton donor is the H89. Position 114 (F114) interacts with 5-amino-6-(D-ribitylamino)uracil. Position 128 (R128) interacts with (2S)-2-hydroxy-3-oxobutyl phosphate.

It belongs to the DMRL synthase family.

It catalyses the reaction (2S)-2-hydroxy-3-oxobutyl phosphate + 5-amino-6-(D-ribitylamino)uracil = 6,7-dimethyl-8-(1-D-ribityl)lumazine + phosphate + 2 H2O + H(+). It participates in cofactor biosynthesis; riboflavin biosynthesis; riboflavin from 2-hydroxy-3-oxobutyl phosphate and 5-amino-6-(D-ribitylamino)uracil: step 1/2. Functionally, catalyzes the formation of 6,7-dimethyl-8-ribityllumazine by condensation of 5-amino-6-(D-ribitylamino)uracil with 3,4-dihydroxy-2-butanone 4-phosphate. This is the penultimate step in the biosynthesis of riboflavin. The sequence is that of 6,7-dimethyl-8-ribityllumazine synthase from Helicobacter acinonychis (strain Sheeba).